Here is a 253-residue protein sequence, read N- to C-terminus: Chloride intracellular channel protein 4 (253 aa).

The residue at position 2 (A2) is an N-acetylalanine. Residues A2–P101 are required for insertion into the membrane. A Phosphoserine modification is found at S4. The residue at position 24 (K24) is an N6-acetyllysine. The G-site motif lies at C35 to S38. Residues F37 to V57 form a helical membrane-spanning segment. The GST C-terminal domain occupies N81 to Y244. Position 130 is an N6-acetyllysine (K130). S132, S167, and S236 each carry phosphoserine. The residue at position 244 (Y244) is a Phosphotyrosine.

Belongs to the chloride channel CLIC family. As to quaternary structure, component of a multimeric complex consisting of several cytoskeletal proteins, including actin, ezrin, alpha-actinin, gelsolin, IQGAP1 and CLIC5A. Binds directly to brain dynamin I in a complex containing actin, tubulin and 14-3-3 isoforms. Monomer. Interacts with HRH3. Interacts with AKAP9. Detected in epithelial cells from colon, esophagus and kidney (at protein level). Expression is prominent in heart, kidney, placenta and skeletal muscle.

The protein resides in the cytoplasm. It is found in the cytoskeleton. It localises to the microtubule organizing center. The protein localises to the centrosome. Its subcellular location is the cytoplasmic vesicle membrane. The protein resides in the nucleus. It is found in the cell membrane. It localises to the mitochondrion. The protein localises to the cell junction. Its subcellular location is the endoplasmic reticulum membrane. It carries out the reaction chloride(in) = chloride(out). It catalyses the reaction thiocyanate(in) = thiocyanate(out). The enzyme catalyses nitrate(in) = nitrate(out). The catalysed reaction is iodide(out) = iodide(in). It carries out the reaction bromide(in) = bromide(out). It catalyses the reaction fluoride(in) = fluoride(out). The enzyme catalyses choline(out) = choline(in). Its activity is regulated as follows. Inhibited by rapamycin, amphotericin B and IAA-94. In the soluble state, catalyzes glutaredoxin-like thiol disulfide exchange reactions with reduced glutathione as electron donor. Can insert into membranes and form voltage-dependent multi-ion conductive channels. Membrane insertion seems to be redox-regulated and may occur only under oxidizing conditions. Has alternate cellular functions like a potential role in angiogenesis or in maintaining apical-basolateral membrane polarity during mitosis and cytokinesis. Could also promote endothelial cell proliferation and regulate endothelial morphogenesis (tubulogenesis). Promotes cell-surface expression of HRH3. This Homo sapiens (Human) protein is Chloride intracellular channel protein 4.